The sequence spans 89 residues: Defensin-like protein 197 (89 aa).

The N-terminal stretch at 1–26 (MKFVSVFLVLFIFFLVVLEAPEKIEA) is a signal peptide. 4 disulfides stabilise this stretch: C33/C86, C46/C70, C55/C81, and C59/C83.

This sequence belongs to the DEFL family. Protease inhibitor I18 (RTI/MTI-2) subfamily.

Its subcellular location is the secreted. In Arabidopsis thaliana (Mouse-ear cress), this protein is Defensin-like protein 197 (ATTI6).